The chain runs to 330 residues: Tetraacyldisaccharide 4'-kinase (330 aa).

T58–T65 contributes to the ATP binding site.

The protein belongs to the LpxK family.

The enzyme catalyses a lipid A disaccharide + ATP = a lipid IVA + ADP + H(+). It functions in the pathway glycolipid biosynthesis; lipid IV(A) biosynthesis; lipid IV(A) from (3R)-3-hydroxytetradecanoyl-[acyl-carrier-protein] and UDP-N-acetyl-alpha-D-glucosamine: step 6/6. Transfers the gamma-phosphate of ATP to the 4'-position of a tetraacyldisaccharide 1-phosphate intermediate (termed DS-1-P) to form tetraacyldisaccharide 1,4'-bis-phosphate (lipid IVA). This is Tetraacyldisaccharide 4'-kinase from Shewanella halifaxensis (strain HAW-EB4).